Reading from the N-terminus, the 158-residue chain is Cysteine-rich venom protein VAR7 (158 aa).

A signal peptide spans 1–22 (MILLKLYLTLAAILCQSRGTTS). The SCP domain occupies 41-158 (NKHNDLRRTV…MGCAINLCPN (118 aa)). A disulfide bridge links Cys-77 with Cys-156.

It belongs to the CRISP family. In terms of processing, contains 8 disulfide bonds. In terms of tissue distribution, expressed by the venom gland.

The protein resides in the secreted. Blocks ryanodine receptors, and potassium channels. The sequence is that of Cysteine-rich venom protein VAR7 from Varanus acanthurus (Ridge-tailed monitor).